Consider the following 382-residue polypeptide: Pentatricopeptide repeat-containing protein 2, mitochondrial (382 aa).

The stretch at 159-193 is one PPR repeat; the sequence is TSFNILMDMLFTKGQYERAVEVLVEMRNQRVRFSK.

The protein belongs to the PTCD2 family.

It is found in the mitochondrion. May be involved in mitochondrial RNA maturation and mitochondrial respiratory chain function. This chain is Pentatricopeptide repeat-containing protein 2, mitochondrial (ptcd2), found in Xenopus laevis (African clawed frog).